Consider the following 111-residue polypeptide: SPbeta prophage-derived uncharacterized protein YopW (111 aa).

The chain is SPbeta prophage-derived uncharacterized protein YopW (yopW) from Bacillus subtilis (strain 168).